The chain runs to 182 residues: Crossover junction endodeoxyribonuclease RuvC (182 aa).

Active-site residues include aspartate 7, glutamate 69, and aspartate 141. 3 residues coordinate Mg(2+): aspartate 7, glutamate 69, and aspartate 141.

Belongs to the RuvC family. Homodimer which binds Holliday junction (HJ) DNA. The HJ becomes 2-fold symmetrical on binding to RuvC with unstacked arms; it has a different conformation from HJ DNA in complex with RuvA. In the full resolvosome a probable DNA-RuvA(4)-RuvB(12)-RuvC(2) complex forms which resolves the HJ. Mg(2+) serves as cofactor.

The protein resides in the cytoplasm. The catalysed reaction is Endonucleolytic cleavage at a junction such as a reciprocal single-stranded crossover between two homologous DNA duplexes (Holliday junction).. Functionally, the RuvA-RuvB-RuvC complex processes Holliday junction (HJ) DNA during genetic recombination and DNA repair. Endonuclease that resolves HJ intermediates. Cleaves cruciform DNA by making single-stranded nicks across the HJ at symmetrical positions within the homologous arms, yielding a 5'-phosphate and a 3'-hydroxyl group; requires a central core of homology in the junction. The consensus cleavage sequence is 5'-(A/T)TT(C/G)-3'. Cleavage occurs on the 3'-side of the TT dinucleotide at the point of strand exchange. HJ branch migration catalyzed by RuvA-RuvB allows RuvC to scan DNA until it finds its consensus sequence, where it cleaves and resolves the cruciform DNA. The protein is Crossover junction endodeoxyribonuclease RuvC of Polaromonas naphthalenivorans (strain CJ2).